A 317-amino-acid polypeptide reads, in one-letter code: Transaldolase (317 aa).

K132 acts as the Schiff-base intermediate with substrate in catalysis.

It belongs to the transaldolase family. Type 1 subfamily. In terms of assembly, homodimer.

It is found in the cytoplasm. It carries out the reaction D-sedoheptulose 7-phosphate + D-glyceraldehyde 3-phosphate = D-erythrose 4-phosphate + beta-D-fructose 6-phosphate. It participates in carbohydrate degradation; pentose phosphate pathway; D-glyceraldehyde 3-phosphate and beta-D-fructose 6-phosphate from D-ribose 5-phosphate and D-xylulose 5-phosphate (non-oxidative stage): step 2/3. Transaldolase is important for the balance of metabolites in the pentose-phosphate pathway. This is Transaldolase from Shigella dysenteriae serotype 1 (strain Sd197).